Here is a 22-residue protein sequence, read N- to C-terminus: Antimicrobial peptide 5 (22 aa).

Leu-22 carries the post-translational modification Leucine amide.

In terms of tissue distribution, skin.

Its subcellular location is the secreted. Its function is as follows. Has very strong antimicrobial activity against Gram-positive bacterium S.aureus, Gram-negative bacterium E.coli and yeast C.albicans. Has strong hemolytic activity against human red blood cells. This is Antimicrobial peptide 5 from Xenopus tropicalis (Western clawed frog).